The chain runs to 275 residues: Tropinone reductase-like 2 (275 aa).

17 to 41 (IITGGASGIGACTAELFHENGAKVV) contacts NAD(+). Serine 150 is a binding site for substrate. Tyrosine 163 functions as the Proton acceptor in the catalytic mechanism.

It belongs to the short-chain dehydrogenases/reductases (SDR) family.

Has no tropinone reductase activity. This is Tropinone reductase-like 2 from Erythroxylum coca (Coca plant).